Consider the following 484-residue polypeptide: MARAIMLQGTGSDVGKTVLVAGLCRLAANRGLAVRPFKPQNMSNNAAVADDGGEIGRAQWLQSLAARAPSSVHMNPVLLKPQSENGSQIIVQGRVFGQSKGRDYQRLKPQLLGAVLESFEKVAAGADLVIVEGAGSPAEINLRAGDIANMGFATRAGVPVVLVGDIDRGGVIASLVGTHAILDDGDRAMIAGYIINKFRGDISLFDDGIRAIEGFTGWPCFGVVPWLPGAARLPAEDSVVLERLAKGRAGALKIAVPVLPRIANFDDLDPLRAEPDVELVFVRSGERLPADASLVILPGSKSTISDLADFRAEGWDRDLHMHVRRGGRVIGICGGYQMLGRTVRDRLGIEGGTLETPGLALLDVETEMAPEKTVRNSHARSTEYDVPLAGYQIHLGITHGPDCDRPSAIVDGVPDGALSADGRIVGTYLHGLFGSDAYRTRLLQSFGLSGERRNYRESVEQALDEIAGELERYLDPRWLAGLLG.

Positions 251–438 (ALKIAVPVLP…LHGLFGSDAY (188 aa)) constitute a GATase cobBQ-type domain. Catalysis depends on Cys333, which acts as the Nucleophile. The active site involves His430.

The protein belongs to the CobB/CobQ family. CobQ subfamily.

Its pathway is cofactor biosynthesis; adenosylcobalamin biosynthesis. In terms of biological role, catalyzes amidations at positions B, D, E, and G on adenosylcobyrinic A,C-diamide. NH(2) groups are provided by glutamine, and one molecule of ATP is hydrogenolyzed for each amidation. In Rhizobium leguminosarum bv. trifolii (strain WSM2304), this protein is Cobyric acid synthase.